A 226-amino-acid polypeptide reads, in one-letter code: PKHD-type hydroxylase PST_0995 (226 aa).

A Fe2OG dioxygenase domain is found at 78–178; the sequence is KVFPPLFNCY…RLASFFWIQS (101 aa). Fe cation contacts are provided by histidine 96, aspartate 98, and histidine 159. Arginine 169 provides a ligand contact to 2-oxoglutarate.

Requires Fe(2+) as cofactor. L-ascorbate serves as cofactor.

This Stutzerimonas stutzeri (strain A1501) (Pseudomonas stutzeri) protein is PKHD-type hydroxylase PST_0995.